The following is a 414-amino-acid chain: Putative transporter AmpG 4 (414 aa).

12 consecutive transmembrane segments (helical) span residues 15 to 35 (IFIL…TLAV), 44 to 63 (IAVI…KVFW), 84 to 104 (WLIL…KENP), 109 to 129 (TSFY…DIAV), 150 to 170 (VFGY…LAEI), 177 to 197 (LTFC…ITVN), 230 to 250 (FAVT…MLGA), 268 to 288 (IIAK…GGIV), 295 to 315 (FKGL…FIWL), 324 to 344 (ALLI…TALV), 360 to 379 (YALL…IYAG), and 389 to 409 (GFFL…MYLN).

This sequence belongs to the major facilitator superfamily.

It is found in the cell inner membrane. This chain is Putative transporter AmpG 4 (ampG4), found in Rickettsia conorii (strain ATCC VR-613 / Malish 7).